We begin with the raw amino-acid sequence, 992 residues long: Ankyrin repeat domain-containing protein 18A (992 aa).

ANK repeat units lie at residues 67–96, 100–129, 133–162, 166–195, and 199–228; these read KDRT…QIDI, LNRT…NPNI, YGNT…NIEA, EGNT…NIHA, and FKRT…RISS. A disordered region spans residues 262 to 320; the sequence is NHLRNDNQETAAMKPANLKKRKERAKAEHNLKVASEEKQERLQRSENKQPQDSQSYGKK. 4 coiled-coil regions span residues 278–310, 378–618, 683–713, and 743–899; these read NLKK…ENKQ, KMIT…AERE, ISLL…CLEM, and FKKL…EAFA. The segment covering 286 to 310 has biased composition (basic and acidic residues); that stretch reads AKAEHNLKVASEEKQERLQRSENKQ.

The chain is Ankyrin repeat domain-containing protein 18A (ANKRD18A) from Homo sapiens (Human).